Here is a 383-residue protein sequence, read N- to C-terminus: S-adenosylmethionine synthase (383 aa).

His-15 provides a ligand contact to ATP. Residue Asp-17 coordinates Mg(2+). Glu-43 contributes to the K(+) binding site. L-methionine is bound by residues Glu-56 and Gln-99. Residues 99–109 (QSQDINQGVDR) form a flexible loop region. ATP-binding positions include 164–166 (DAK), 230–231 (RF), Asp-239, 245–246 (RK), Ala-262, and Lys-266. Asp-239 is an L-methionine binding site. Lys-270 lines the L-methionine pocket.

Belongs to the AdoMet synthase family. In terms of assembly, homotetramer; dimer of dimers. Mg(2+) is required as a cofactor. Requires K(+) as cofactor.

Its subcellular location is the cytoplasm. The enzyme catalyses L-methionine + ATP + H2O = S-adenosyl-L-methionine + phosphate + diphosphate. Its pathway is amino-acid biosynthesis; S-adenosyl-L-methionine biosynthesis; S-adenosyl-L-methionine from L-methionine: step 1/1. In terms of biological role, catalyzes the formation of S-adenosylmethionine (AdoMet) from methionine and ATP. The overall synthetic reaction is composed of two sequential steps, AdoMet formation and the subsequent tripolyphosphate hydrolysis which occurs prior to release of AdoMet from the enzyme. This Actinobacillus succinogenes (strain ATCC 55618 / DSM 22257 / CCUG 43843 / 130Z) protein is S-adenosylmethionine synthase.